A 353-amino-acid polypeptide reads, in one-letter code: Phosphate acyltransferase (353 aa).

The protein belongs to the PlsX family. In terms of assembly, homodimer. Probably interacts with PlsY.

The protein localises to the cytoplasm. The enzyme catalyses a fatty acyl-[ACP] + phosphate = an acyl phosphate + holo-[ACP]. The protein operates within lipid metabolism; phospholipid metabolism. Catalyzes the reversible formation of acyl-phosphate (acyl-PO(4)) from acyl-[acyl-carrier-protein] (acyl-ACP). This enzyme utilizes acyl-ACP as fatty acyl donor, but not acyl-CoA. The chain is Phosphate acyltransferase from Afipia carboxidovorans (strain ATCC 49405 / DSM 1227 / KCTC 32145 / OM5) (Oligotropha carboxidovorans).